The chain runs to 259 residues: Ribosomal RNA large subunit methyltransferase E (259 aa).

S-adenosyl-L-methionine-binding residues include G58, W60, D78, D96, and D120. K160 (proton acceptor) is an active-site residue.

This sequence belongs to the class I-like SAM-binding methyltransferase superfamily. RNA methyltransferase RlmE family.

The protein resides in the cytoplasm. The enzyme catalyses uridine(2552) in 23S rRNA + S-adenosyl-L-methionine = 2'-O-methyluridine(2552) in 23S rRNA + S-adenosyl-L-homocysteine + H(+). Specifically methylates the uridine in position 2552 of 23S rRNA at the 2'-O position of the ribose in the fully assembled 50S ribosomal subunit. The sequence is that of Ribosomal RNA large subunit methyltransferase E from Methanococcus vannielii (strain ATCC 35089 / DSM 1224 / JCM 13029 / OCM 148 / SB).